The following is a 303-amino-acid chain: N-acetyl-D-glucosamine kinase (303 aa).

ATP-binding positions include Gly-4–Lys-11 and Gly-133–Phe-140. Zn(2+) is bound by residues His-157, Cys-177, Cys-179, and Cys-184.

This sequence belongs to the ROK (NagC/XylR) family. NagK subfamily.

The catalysed reaction is N-acetyl-D-glucosamine + ATP = N-acetyl-D-glucosamine 6-phosphate + ADP + H(+). The protein operates within cell wall biogenesis; peptidoglycan recycling. Its function is as follows. Catalyzes the phosphorylation of N-acetyl-D-glucosamine (GlcNAc) derived from cell-wall degradation, yielding GlcNAc-6-P. The polypeptide is N-acetyl-D-glucosamine kinase (Escherichia coli O139:H28 (strain E24377A / ETEC)).